Here is a 171-residue protein sequence, read N- to C-terminus: Shikimate kinase (171 aa).

14–19 (GAGKST) contributes to the ATP binding site. S18 contributes to the Mg(2+) binding site. D36, R60, and G82 together coordinate substrate. R120 contributes to the ATP binding site. Residue R139 coordinates substrate. Residue Q156 participates in ATP binding.

This sequence belongs to the shikimate kinase family. Monomer. It depends on Mg(2+) as a cofactor.

The protein resides in the cytoplasm. It carries out the reaction shikimate + ATP = 3-phosphoshikimate + ADP + H(+). It functions in the pathway metabolic intermediate biosynthesis; chorismate biosynthesis; chorismate from D-erythrose 4-phosphate and phosphoenolpyruvate: step 5/7. Its function is as follows. Catalyzes the specific phosphorylation of the 3-hydroxyl group of shikimic acid using ATP as a cosubstrate. In Shewanella putrefaciens (strain CN-32 / ATCC BAA-453), this protein is Shikimate kinase.